Consider the following 180-residue polypeptide: Cell division protein SepF (180 aa).

The tract at residues 1 to 66 (MAFSFKSFFG…NRNGFAYDNG (66 aa)) is disordered. A compositionally biased stretch (acidic residues) spans 12 to 23 (ADDEEEEYEDSG). A compositionally biased stretch (low complexity) spans 24-57 (YEQQPNQGQQQPVNSQQQNTSNQSYSGYNNQNQN).

Belongs to the SepF family. Homodimer. Interacts with FtsZ.

The protein resides in the cytoplasm. Its function is as follows. Cell division protein that is part of the divisome complex and is recruited early to the Z-ring. Probably stimulates Z-ring formation, perhaps through the cross-linking of FtsZ protofilaments. Its function overlaps with FtsA. The polypeptide is Cell division protein SepF (Oenococcus oeni (strain ATCC BAA-331 / PSU-1)).